Here is a 154-residue protein sequence, read N- to C-terminus: Sperm microtubule associated protein 1 (154 aa).

The polypeptide is Sperm microtubule associated protein 1 (Homo sapiens (Human)).